We begin with the raw amino-acid sequence, 400 residues long: Protein transport protein HofC homolog (400 aa).

Transmembrane regions (helical) follow at residues 165 to 185, 209 to 229, and 370 to 390; these read YPIIILAMAIMVVVAMLHFVL, LADFSGEWSWLLVLFGFLLAI, and LLIITGGIIGTLVVAMYLPIF.

This sequence belongs to the GSP F family.

The protein localises to the cell inner membrane. This is Protein transport protein HofC homolog (hofC) from Escherichia coli (strain K12).